We begin with the raw amino-acid sequence, 244 residues long: Tegument protein UL51 homolog (244 aa).

Residue cysteine 10 is the site of S-palmitoyl cysteine; by host attachment.

This sequence belongs to the herpesviridae UL51 family. Oligomerizes. Interacts with ORF55; this interaction mediates ORF55 incorporation to virions. In terms of processing, phosphorylated. Palmitoylation is necessary for Golgi localization.

The protein resides in the virion tegument. Its subcellular location is the host cytoplasm. It localises to the host Golgi apparatus. Functionally, plays several roles during the time course of infection, including egress of virus particles from the perinuclear space and secondary envelopment of cytoplasmic capsids that bud into specific trans-Golgi network (TGN)-derived membranes. This chain is Tegument protein UL51 homolog (8), found in Equus caballus (Horse).